The following is an 828-amino-acid chain: Periplasmic nitrate reductase (828 aa).

Residues 1–31 (MKLSRRSFMKANAVAAAAAAAGLSVPGVARA) constitute a signal peptide (tat-type signal). Residues 39–95 (IKWDKAPCRFCGTGCGVLVGTQQGRVVACQGDPDAPVNRGLNCIKGYFLPKIMYGKD) form the 4Fe-4S Mo/W bis-MGD-type domain. The [4Fe-4S] cluster site is built by cysteine 46, cysteine 49, cysteine 53, and cysteine 81. Residues lysine 83, glutamine 150, asparagine 175, cysteine 179, 212–219 (WGSNMAEM), 243–247 (STYQH), 262–264 (QSD), methionine 372, glutamine 376, asparagine 482, 508–509 (SD), lysine 531, aspartate 558, and 718–727 (TGRVLEHWHT) contribute to the Mo-bis(molybdopterin guanine dinucleotide) site. Phenylalanine 794 contacts substrate. Positions 802 and 819 each coordinate Mo-bis(molybdopterin guanine dinucleotide).

It belongs to the prokaryotic molybdopterin-containing oxidoreductase family. NasA/NapA/NarB subfamily. In terms of assembly, component of the periplasmic nitrate reductase NapAB complex composed of NapA and NapB. It depends on [4Fe-4S] cluster as a cofactor. Mo-bis(molybdopterin guanine dinucleotide) serves as cofactor. In terms of processing, predicted to be exported by the Tat system. The position of the signal peptide cleavage has not been experimentally proven.

The protein resides in the periplasm. It carries out the reaction 2 Fe(II)-[cytochrome] + nitrate + 2 H(+) = 2 Fe(III)-[cytochrome] + nitrite + H2O. Its function is as follows. Catalytic subunit of the periplasmic nitrate reductase complex NapAB. Receives electrons from NapB and catalyzes the reduction of nitrate to nitrite. This is Periplasmic nitrate reductase from Escherichia coli O127:H6 (strain E2348/69 / EPEC).